We begin with the raw amino-acid sequence, 1037 residues long: Ephrin type-A receptor 5 (1037 aa).

The N-terminal stretch at 1–24 (MRGSGPRGAGRRRPPSGGGDTPIT) is a signal peptide. Residues 1–24 (MRGSGPRGAGRRRPPSGGGDTPIT) are disordered. Topologically, residues 25–573 (PASLAGCYSA…AASSDQSQIP (549 aa)) are extracellular. An Eph LBD domain is found at 60 to 238 (EVNLLDSRTV…YYKKCPSVVR (179 aa)). 6 N-linked (GlcNAc...) asparagine glycosylation sites follow: Asn-264, Asn-299, Asn-369, Asn-423, Asn-436, and Asn-461. 2 consecutive Fibronectin type-III domains span residues 357 to 467 (PPSA…TNQA) and 468 to 562 (APSP…TTPV). Residues 574-594 (VIAVSVTVGVILLAVVIGVLL) form a helical membrane-spanning segment. Residues 595–1037 (SGSCCECGCG…VQLVNGMVPL (443 aa)) are Cytoplasmic-facing. Phosphotyrosine; by autocatalysis is present on residues Tyr-650 and Tyr-656. Residues 675–936 (ITIERVIGAG…EIVNMLDKLI (262 aa)) enclose the Protein kinase domain. ATP-binding positions include 681 to 689 (IGAGEFGEV) and Lys-707. The Proton acceptor role is filled by Asp-800. Phosphotyrosine; by autocatalysis is present on residues Tyr-833 and Tyr-982. The region spanning 965-1029 (GAYRSVGEWL…MNSLQEMKVQ (65 aa)) is the SAM domain. The PDZ-binding signature appears at 1035 to 1037 (VPL).

Belongs to the protein kinase superfamily. Tyr protein kinase family. Ephrin receptor subfamily. In terms of assembly, heterotetramer upon binding of the ligand. The heterotetramer is composed of an ephrin dimer and a receptor dimer. Oligomerization is probably required to induce biological responses. Interacts (via SAM domain) with SAMD5 (via SAM domain). Post-translationally, phosphorylated. Phosphorylation is stimulated by the ligand EFNA5. Dephosphorylation upon stimulation by glucose, inhibits EPHA5 forward signaling and results in insulin secretion. In terms of tissue distribution, almost exclusively expressed in the nervous system in cortical neurons, cerebellar Purkinje cells and pyramidal neurons within the cortex and hippocampus. Display an increasing gradient of expression from the forebrain to hindbrain and spinal cord.

It localises to the cell membrane. Its subcellular location is the cell projection. It is found in the axon. The protein resides in the dendrite. It catalyses the reaction L-tyrosyl-[protein] + ATP = O-phospho-L-tyrosyl-[protein] + ADP + H(+). Functionally, receptor tyrosine kinase which binds promiscuously GPI-anchored ephrin-A family ligands residing on adjacent cells, leading to contact-dependent bidirectional signaling into neighboring cells. The signaling pathway downstream of the receptor is referred to as forward signaling while the signaling pathway downstream of the ephrin ligand is referred to as reverse signaling. Among GPI-anchored ephrin-A ligands, EFNA5 most probably constitutes the cognate/functional ligand for EPHA5. Functions as an axon guidance molecule during development and may be involved in the development of the retinotectal, entorhino-hippocampal and hippocamposeptal pathways. Together with EFNA5 plays also a role in synaptic plasticity in adult brain through regulation of synaptogenesis. In addition to its function in the nervous system, the interaction of EPHA5 with EFNA5 mediates communication between pancreatic islet cells to regulate glucose-stimulated insulin secretion. The protein is Ephrin type-A receptor 5 (EPHA5) of Homo sapiens (Human).